A 517-amino-acid chain; its full sequence is Crotonobetaine/carnitine--CoA ligase (517 aa).

The protein belongs to the ATP-dependent AMP-binding enzyme family.

The catalysed reaction is 4-(trimethylamino)butanoate + ATP + CoA = 4-(trimethylamino)butanoyl-CoA + AMP + diphosphate. It carries out the reaction crotonobetaine + ATP + CoA = crotonobetainyl-CoA + AMP + diphosphate. It catalyses the reaction (R)-carnitine + ATP + CoA = (R)-carnitinyl-CoA + AMP + diphosphate. It functions in the pathway amine and polyamine metabolism; carnitine metabolism. In terms of biological role, catalyzes the transfer of CoA to carnitine, generating the initial carnitinyl-CoA needed for the CaiB reaction cycle. Also has activity toward crotonobetaine and gamma-butyrobetaine. This Citrobacter koseri (strain ATCC BAA-895 / CDC 4225-83 / SGSC4696) protein is Crotonobetaine/carnitine--CoA ligase.